Consider the following 829-residue polypeptide: High affinity cAMP-specific and IBMX-insensitive 3',5'-cyclic phosphodiesterase 8A (829 aa).

A disordered region spans residues 16–46 (EDAPSPAAPPLSSGGPRLPQGQKTAALPRTR). Ser20 is subject to Phosphoserine. The region spanning 213–283 (ACNSVFTALE…DTINSCIRIG (71 aa)) is the PAS domain. The region spanning 287–329 (QGIYYAKKKNGDNIQQNVKIIPVIGQGGKIRHYVSIIRVCNGN) is the PAC domain. The tract at residues 341 to 360 (SDTHTDNQTGKHKDRRKGSL) is disordered. Ser359 bears the Phosphoserine; by PKA mark. Phosphoserine occurs at positions 386 and 457. An involved in RAF1-binding region spans residues 454 to 461 (RRLSGNEY). Tyr461 is modified (phosphotyrosine). A PDEase domain is found at 480-820 (SLDDVPPRIA…KYWKGLDEMK (341 aa)). His556 functions as the Proton donor in the catalytic mechanism. A divalent metal cation-binding residues include His560, His596, Asp597, and Asp726.

It belongs to the cyclic nucleotide phosphodiesterase family. PDE8 subfamily. As to quaternary structure, interacts with RAF1. The interaction promotes RAF1 activity. The cofactor is a divalent metal cation. In terms of processing, phosphorylated at Ser-359 by PKA under elevated cAMP conditions, this enhances catalytic activity. As to expression, expressed in most tissues except thymus and peripheral blood leukocytes. Highest levels in testis, ovary, small intestine and colon.

It catalyses the reaction 3',5'-cyclic AMP + H2O = AMP + H(+). It participates in purine metabolism; 3',5'-cyclic AMP degradation; AMP from 3',5'-cyclic AMP: step 1/1. Inhibited by dipyridimole. Insensitive to selective PDE inhibitors including rolipram and zaprinast as well as to the non-selective inhibitor, IBMX. Unaffected by cGMP. Functionally, hydrolyzes the second messenger cAMP, which is a key regulator of many important physiological processes. May be involved in maintaining basal levels of the cyclic nucleotide and/or in the cAMP regulation of germ cell development. Binding to RAF1 reduces RAF1 'Ser-259' inhibitory-phosphorylation and stimulates RAF1-dependent EGF-activated ERK-signaling. Protects against cell death induced by hydrogen peroxide and staurosporine. The polypeptide is High affinity cAMP-specific and IBMX-insensitive 3',5'-cyclic phosphodiesterase 8A (PDE8A) (Homo sapiens (Human)).